Reading from the N-terminus, the 623-residue chain is Activator of C kinase protein 1 (623 aa).

Residues 141–230 (KESLGSPAVQ…GSSGGEDKLS (90 aa)) form a disordered region. Over residues 152–161 (ASISSGNRIS) the composition is skewed to polar residues. Positions 176–193 (SESRILQEKVYRTEEKAP) are enriched in basic and acidic residues. Residues Lys184 and Lys191 each participate in a glycyl lysine isopeptide (Lys-Gly) (interchain with G-Cter in ubiquitin) cross-link. The segment covering 206–215 (KINQPPTGSA) has biased composition (polar residues). 4 Sel1-like repeats span residues 318-361 (PPAM…KLNN), 408-444 (SACM…QKGD), 495-531 (PLAQ…AAQP), and 576-611 (ARTE…RMGF).

In Saccharomyces cerevisiae (strain ATCC 204508 / S288c) (Baker's yeast), this protein is Activator of C kinase protein 1 (ACK1).